The primary structure comprises 393 residues: Lipoyl synthase, mitochondrial (393 aa).

Residues cysteine 115, cysteine 120, cysteine 126, cysteine 146, cysteine 150, cysteine 153, and serine 362 each contribute to the [4Fe-4S] cluster site. A Radical SAM core domain is found at 131-351 (ETGTATATIM…RILGMDMGFR (221 aa)).

It belongs to the radical SAM superfamily. Lipoyl synthase family. The cofactor is [4Fe-4S] cluster.

Its subcellular location is the mitochondrion. The catalysed reaction is [[Fe-S] cluster scaffold protein carrying a second [4Fe-4S](2+) cluster] + N(6)-octanoyl-L-lysyl-[protein] + 2 oxidized [2Fe-2S]-[ferredoxin] + 2 S-adenosyl-L-methionine + 4 H(+) = [[Fe-S] cluster scaffold protein] + N(6)-[(R)-dihydrolipoyl]-L-lysyl-[protein] + 4 Fe(3+) + 2 hydrogen sulfide + 2 5'-deoxyadenosine + 2 L-methionine + 2 reduced [2Fe-2S]-[ferredoxin]. It participates in protein modification; protein lipoylation via endogenous pathway; protein N(6)-(lipoyl)lysine from octanoyl-[acyl-carrier-protein]: step 2/2. Catalyzes the radical-mediated insertion of two sulfur atoms into the C-6 and C-8 positions of the octanoyl moiety bound to the lipoyl domains of lipoate-dependent enzymes, thereby converting the octanoylated domains into lipoylated derivatives. This Vitis vinifera (Grape) protein is Lipoyl synthase, mitochondrial.